The following is a 488-amino-acid chain: Cobyric acid synthase (488 aa).

In terms of domain architecture, GATase cobBQ-type spans 252 to 442 (RTRICVPILP…VHGLFASDAF (191 aa)). The Nucleophile role is filled by Cys334. Residue His434 is part of the active site.

The protein belongs to the CobB/CobQ family. CobQ subfamily.

The protein operates within cofactor biosynthesis; adenosylcobalamin biosynthesis. In terms of biological role, catalyzes amidations at positions B, D, E, and G on adenosylcobyrinic A,C-diamide. NH(2) groups are provided by glutamine, and one molecule of ATP is hydrogenolyzed for each amidation. This chain is Cobyric acid synthase, found in Xanthobacter autotrophicus (strain ATCC BAA-1158 / Py2).